Reading from the N-terminus, the 193-residue chain is Probable GTP-binding protein EngB (193 aa).

The 172-residue stretch at 22-193 (QLPEFALAGR…EAWGALQKWM (172 aa)) folds into the EngB-type G domain. Residues 30–37 (GRSNVGKS), 57–61 (GKTQT), 75–78 (DVPG), 142–145 (TKAD), and 174–176 (FSA) each bind GTP. Residues Ser-37 and Thr-59 each coordinate Mg(2+).

It belongs to the TRAFAC class TrmE-Era-EngA-EngB-Septin-like GTPase superfamily. EngB GTPase family. It depends on Mg(2+) as a cofactor.

In terms of biological role, necessary for normal cell division and for the maintenance of normal septation. The sequence is that of Probable GTP-binding protein EngB from Anoxybacillus flavithermus (strain DSM 21510 / WK1).